Here is a 238-residue protein sequence, read N- to C-terminus: Ephrin-A3 (238 aa).

The first 22 residues, 1-22 (MAAAPLLLLLLLVPVPLLPLLA), serve as a signal peptide directing secretion. An Ephrin RBD domain is found at 30 to 169 (GNRHAVYWNS…RMKVFVCCAS (140 aa)). N-linked (GlcNAc...) asparagine glycans are attached at residues asparagine 38, asparagine 67, and asparagine 100. 2 cysteine pairs are disulfide-bonded: cysteine 63/cysteine 110 and cysteine 99/cysteine 158. Glycine 214 carries GPI-anchor amidated glycine lipidation. Positions 215–238 (TSPKREHLPLAVGIAFFLMTFLAS) are cleaved as a propeptide — removed in mature form.

Belongs to the ephrin family. Interacts with EPHA8; activates EPHA8. As to expression, expressed in brain, skeletal muscle, spleen, thymus, prostate, testis, ovary, small intestine, and peripheral blood leukocytes.

Its subcellular location is the cell membrane. Cell surface GPI-bound ligand for Eph receptors, a family of receptor tyrosine kinases which are crucial for migration, repulsion and adhesion during neuronal, vascular and epithelial development. Binds promiscuously Eph receptors residing on adjacent cells, leading to contact-dependent bidirectional signaling into neighboring cells. The signaling pathway downstream of the receptor is referred to as forward signaling while the signaling pathway downstream of the ephrin ligand is referred to as reverse signaling. This Homo sapiens (Human) protein is Ephrin-A3 (EFNA3).